Consider the following 247-residue polypeptide: tRNA (guanine-N(1)-)-methyltransferase (247 aa).

Residues G112 and 131–136 (LGDFVL) each bind S-adenosyl-L-methionine.

Belongs to the RNA methyltransferase TrmD family. As to quaternary structure, homodimer.

It localises to the cytoplasm. It catalyses the reaction guanosine(37) in tRNA + S-adenosyl-L-methionine = N(1)-methylguanosine(37) in tRNA + S-adenosyl-L-homocysteine + H(+). Specifically methylates guanosine-37 in various tRNAs. This is tRNA (guanine-N(1)-)-methyltransferase from Syntrophotalea carbinolica (strain DSM 2380 / NBRC 103641 / GraBd1) (Pelobacter carbinolicus).